The chain runs to 296 residues: Malonyl-[acyl-carrier protein] O-methyltransferase (296 aa).

The protein belongs to the methyltransferase superfamily.

It catalyses the reaction malonyl-[ACP] + S-adenosyl-L-methionine = malonyl-[ACP] methyl ester + S-adenosyl-L-homocysteine. Its pathway is cofactor biosynthesis; biotin biosynthesis. Functionally, converts the free carboxyl group of a malonyl-thioester to its methyl ester by transfer of a methyl group from S-adenosyl-L-methionine (SAM). It allows to synthesize pimeloyl-ACP via the fatty acid synthetic pathway. The polypeptide is Malonyl-[acyl-carrier protein] O-methyltransferase (Methylovorus sp. (strain MP688)).